Reading from the N-terminus, the 300-residue chain is Meiosis-specific cyclin crs1 (300 aa).

The Cyclin N-terminal domain occupies 61-183; the sequence is IIEQEKKGLT…VLALLNFDIY (123 aa).

The protein belongs to the cyclin family. Cyclin AB subfamily.

It is found in the cytoplasm. The protein localises to the nucleus. Its function is as follows. Has a role in meiotic chromosome segregation. This Schizosaccharomyces pombe (strain 972 / ATCC 24843) (Fission yeast) protein is Meiosis-specific cyclin crs1 (crs1).